A 320-amino-acid chain; its full sequence is Small ribosomal subunit protein mS35 (320 aa).

A disordered region spans residues Ser24 to Trp63.

This sequence belongs to the mitochondrion-specific ribosomal protein mS35 family. Component of the mitochondrial ribosome small subunit (28S) which comprises a 12S rRNA and about 30 distinct proteins.

Its subcellular location is the mitochondrion. In Mus musculus (Mouse), this protein is Small ribosomal subunit protein mS35.